We begin with the raw amino-acid sequence, 123 residues long: MEESRAAADADVSLHNFSARLWEQLVHFHVMRLTDSLFLWVGATPHLRNLAVAMCSRYDPIPVCTSLFGDTSDTTSTGLAQRLARKTSKQVFVSYNLSNTDSNFTLLVENRIKEEMETFPEKF.

This sequence belongs to the PSMG4 family. Interacts with PSMG3. Associates with alpha subunits of the 20S proteasome.

In terms of biological role, chaperone protein which promotes assembly of the 20S proteasome. The polypeptide is Proteasome assembly chaperone 4 (Psmg4) (Mus musculus (Mouse)).